Here is a 145-residue protein sequence, read N- to C-terminus: Oleosin L (145 aa).

At alanine 2 the chain carries N-acetylalanine. 2 helical membrane passes run 36–56 (GSLL…LTIA) and 59–79 (LLVI…LLGA). The short motif at 58-69 (PLLVIFSPVLVP) is the Proline-knot element. Positions 123–132 (KAREMKDRAE) are enriched in basic and acidic residues. Residues 123–145 (KAREMKDRAEQFSQQPVAGSQTS) form a disordered region. A compositionally biased stretch (polar residues) spans 133 to 145 (QFSQQPVAGSQTS).

The protein belongs to the oleosin family. Expressed in seeds (at protein level).

It localises to the lipid droplet. It is found in the membrane. May have a structural role to stabilize the lipid body during desiccation of the seed by preventing coalescence of the oil. Probably interacts with both lipid and phospholipid moieties of lipid bodies. May also provide recognition signals for specific lipase anchorage in lipolysis during seedling growth. This is Oleosin L from Sesamum indicum (Oriental sesame).